We begin with the raw amino-acid sequence, 329 residues long: Small ribosomal subunit protein RACK1 (329 aa).

7 WD repeats span residues 19 to 59 (GHNG…ATSP), 68 to 107 (GHSH…STRL), 110 to 149 (GHTQ…KFTL), 154 to 193 (AHQD…CNHT), 196 to 235 (DHTG…PLYK), 237 to 275 (EARN…VLAE), and 295 to 328 (PKAP…KSSS).

Belongs to the WD repeat G protein beta family. Ribosomal protein RACK1 subfamily.

The sequence is that of Small ribosomal subunit protein RACK1 (gpbB) from Dictyostelium discoideum (Social amoeba).